The primary structure comprises 359 residues: uncharacterized protein (359 aa).

Positions Met1–Thr15 are cleaved as a signal peptide. The N-acetyltransferase domain maps to Ile212–Gln359.

This is an uncharacterized protein from Mycobacterium leprae (strain TN).